The chain runs to 241 residues: Outer membrane protein A (241 aa).

5 beta stranded membrane-spanning segments follow: residues 1–8 (LTAKLSYP), 13–21 (LDIYTRLGG), 46–55 (PVFAGGVEYA), 60–67 (IATRLEYQ), and 86–94 (MLSVGVSYR). 4 tandem repeats follow at residues 105–106 (AP), 107–108 (AP), 109–110 (AP), and 111–112 (AP). Residues 105 to 112 (APAPAPAP) form a 4 X 2 AA tandem repeats of A-P region. The 128-residue stretch at 114–241 (VQTKHFTLKS…RRVEIEVKGV (128 aa)) folds into the OmpA-like domain. A disulfide bond links Cys215 and Cys227.

This sequence belongs to the outer membrane OOP (TC 1.B.6) superfamily. OmpA family. As to quaternary structure, monomer and homodimer.

It localises to the cell outer membrane. In terms of biological role, with TolR probably plays a role in maintaining the position of the peptidoglycan cell wall in the periplasm. Acts as a porin with low permeability that allows slow penetration of small solutes; an internal gate slows down solute passage. This Shimwellia blattae (Escherichia blattae) protein is Outer membrane protein A.